We begin with the raw amino-acid sequence, 69 residues long: Guanine nucleotide-binding protein G(I)/G(S)/G(O) subunit gamma-T2 (69 aa).

The disordered stretch occupies residues 47–69; it reads DPLLKGIPEDKNPFKEKGGCMIS. Residues 53 to 69 are compositionally biased toward basic and acidic residues; it reads IPEDKNPFKEKGGCMIS. The residue at position 66 (Cys66) is a Cysteine methyl ester. Residue Cys66 is the site of S-farnesyl cysteine attachment. A propeptide spans 67–69 (removed in mature form); it reads MIS.

This sequence belongs to the G protein gamma family. As to quaternary structure, g proteins are composed of 3 units, alpha, beta and gamma.

The protein resides in the cell membrane. Guanine nucleotide-binding proteins (G proteins) are involved as a modulator or transducer in various transmembrane signaling systems. The beta and gamma chains are required for the GTPase activity, for replacement of GDP by GTP, and for G protein-effector interaction. This is Guanine nucleotide-binding protein G(I)/G(S)/G(O) subunit gamma-T2 (GNGT2) from Canis lupus familiaris (Dog).